The chain runs to 317 residues: DNA repair nuclease/redox regulator APEX1 (317 aa).

The disordered stretch occupies residues 1 to 58 (MPKRGKKAAADDGEEPKSEPETKKSKGAAKKTEKEAAGEGPVLYEDPPDQKTSPSGKS). The tract at residues 2 to 32 (PKRGKKAAADDGEEPKSEPETKKSKGAAKKT) is necessary for interaction with YBX1, binding to RNA, association together with NPM1 to rRNA, endoribonuclease activity on abasic RNA and localization in the nucleoli. N6-acetyllysine; by EP300 is present on residues Lys6 and Lys7. The short motif at 8 to 12 (AAADD) is the Nuclear localization signal (NLS) element. Over residues 15-37 (EPKSEPETKKSKGAAKKTEKEAA) the composition is skewed to basic and acidic residues. A Phosphoserine modification is found at Ser18. Residues 22 to 32 (TKKSKGAAKKT) form a necessary for interaction with NPM1 and for efficient rRNA binding region. An N6-acetyllysine mark is found at Lys26, Lys30, Lys31, and Lys34. Phosphoserine is present on Ser53. The Nuclear export signal (NES) signature appears at 63 to 79 (ICSWNVDGLRAWIKKKG). At Cys64 the chain carries S-nitrosocysteine; alternate. A disulfide bond links Cys64 and Cys92. Asp69 provides a ligand contact to Mg(2+). At Cys92 the chain carries S-nitrosocysteine; alternate. Glu95 is a binding site for Mg(2+). Tyr170 is a catalytic residue. Lys196 is subject to N6-acetyllysine. Asp209 and Asn211 together coordinate Mg(2+). Residue Asp209 is the Proton donor/acceptor of the active site. Phosphothreonine; by CDK5 is present on Thr232. The segment at 288–317 (HSLLPALCDSKIRSKALGSDHCPITLYLAL) is mitochondrial targeting sequence (MTS). Residue Asp307 participates in Mg(2+) binding. An S-nitrosocysteine modification is found at Cys309.

The protein belongs to the DNA repair enzymes AP/ExoA family. As to quaternary structure, monomer. Homodimer; disulfide-linked. Component of the SET complex, composed of at least APEX1, SET, ANP32A, HMGB2, NME1 and TREX1. Associates with the dimer XRCC5/XRCC6 in a DNA-dependent manner. Interacts with SIRT1; the interaction is increased in the context of genotoxic stress. Interacts with HDAC1, HDAC2 and HDAC3; the interactions are not dependent on the APEX1 acetylation status. Interacts with XRCC1; the interaction is induced by SIRT1 and increased with the APEX1 acetylated form. Interacts with NPM1 (via N-terminal domain); the interaction is RNA-dependent and decreases in hydrogen peroxide-damaged cells. Interacts (via N-terminus) with YBX1 (via C-terminus); the interaction is increased in presence of APEX1 acetylated at Lys-6 and Lys-7. Interacts with HNRNPL; the interaction is DNA-dependent. Interacts (via N-terminus) with KPNA1 and KPNA2. Interacts with TXN; the interaction stimulates the FOS/JUN AP-1 complex DNA-binding activity in a redox-dependent manner. Interacts with GZMA, KRT8, MDM2, POLB, PRDX6, PRPF19, RPLP0, TOMM20 and WDR77. Binds to CDK5. Mg(2+) serves as cofactor. The cofactor is Mn(2+). Phosphorylated. Phosphorylation by kinase PKC or casein kinase CK2 results in enhanced redox activity that stimulates binding of the FOS/JUN AP-1 complex to its cognate binding site. AP-endodeoxyribonuclease activity is not affected by CK2-mediated phosphorylation. Phosphorylation of Thr-232 by CDK5 in response to MPP(+)/MPTP (1-methyl-4-phenylpyridinium) reduces AP-endodeoxyribonuclease activity resulting in accumulation of DNA damage and contributing to neuronal death. In terms of processing, acetylated on Lys-6 and Lys-7. Acetylation is increased by the transcriptional coactivator EP300 acetyltransferase, genotoxic agents like H(2)O(2) and methyl methanesulfonate (MMS). Acetylation increases its binding affinity to the negative calcium response element (nCaRE) DNA promoter. The acetylated form induces a stronger binding of YBX1 to the Y-box sequence in the MDR1 promoter than the unacetylated form. Deacetylated on lysines. Lys-6 and Lys-7 are deacetylated by SIRT1. Post-translationally, cleaved at Lys-30 by granzyme A to create the mitochondrial form; leading in reduction of binding to DNA, AP endodeoxyribonuclease activity, redox activation of transcription factors and to enhanced cell death. Cleaved by granzyme K; leading to intracellular ROS accumulation and enhanced cell death after oxidative stress. Cys-64 and Cys-92 are nitrosylated in response to nitric oxide (NO) and lead to the exposure of the nuclear export signal (NES). In terms of processing, ubiquitinated by MDM2; leading to translocation to the cytoplasm and proteasomal degradation. Expressed in both resting and stimulated B cells stimulated to switch (at protein level).

It localises to the nucleus. The protein localises to the nucleolus. Its subcellular location is the nucleus speckle. The protein resides in the endoplasmic reticulum. It is found in the cytoplasm. It localises to the mitochondrion. It carries out the reaction a deoxyribonucleotide-2'-deoxyribose-5'-monophosphate-DNA + H2O = a 5'-end 2'-deoxyribose-5'-monophosphate-DNA + a 3'-end 2'-deoxyribonucleotide-DNA + H(+). It catalyses the reaction Exonucleolytic cleavage in the 3'- to 5'-direction to yield nucleoside 5'-phosphates.. The enzyme catalyses a 3'-end 2'-deoxyribonucleotide-3'-phosphoglycolate-DNA + H2O = 2-phosphoglycolate + a 3'-end 2'-deoxyribonucleotide-DNA + H(+). The catalysed reaction is a 3'-end 2'-deoxyribonucleotide-8-oxoguanine-DNA + H2O = 8-oxo-dGMP + a 3'-end 2'-deoxyribonucleotide-DNA + H(+). With respect to regulation, NPM1 stimulates endodeoxyribonuclease activity on double-stranded DNA with AP sites, but inhibits endoribonuclease activity on single-stranded RNA containing AP sites. Multifunctional protein that plays a central role in the cellular response to oxidative stress. The two major activities of APEX1 are DNA repair and redox regulation of transcriptional factors. Functions as an apurinic/apyrimidinic (AP) endodeoxyribonuclease in the base excision repair (BER) pathway of DNA lesions induced by oxidative and alkylating agents. Initiates repair of AP sites in DNA by catalyzing hydrolytic incision of the phosphodiester backbone immediately adjacent to the damage, generating a single-strand break with 5'-deoxyribose phosphate and 3'-hydroxyl ends. Also incises at AP sites in the DNA strand of DNA/RNA hybrids, single-stranded DNA regions of R-loop structures, and single-stranded RNA molecules. Operates at switch sites of immunoglobulin (Ig) constant regions where it mediates Ig isotype class switch recombination. Processes AP sites induced by successive action of AICDA and UNG. Generates staggered nicks in opposite DNA strands resulting in the formation of double-strand DNA breaks that are finally resolved via non-homologous end joining repair pathway. Has 3'-5' exodeoxyribonuclease activity on mismatched deoxyribonucleotides at the 3' termini of nicked or gapped DNA molecules during short-patch BER. Possesses DNA 3' phosphodiesterase activity capable of removing lesions (such as phosphoglycolate and 8-oxoguanine) blocking the 3' side of DNA strand breaks. Also acts as an endoribonuclease involved in the control of single-stranded RNA metabolism. Plays a role in regulating MYC mRNA turnover by preferentially cleaving in between UA and CA dinucleotides of the MYC coding region determinant (CRD). In association with NMD1, plays a role in the rRNA quality control process during cell cycle progression. Acts as a loading factor for POLB onto non-incised AP sites in DNA and stimulates the 5'-terminal deoxyribose 5'-phosphate (dRp) excision activity of POLB. Exerts reversible nuclear redox activity to regulate DNA binding affinity and transcriptional activity of transcriptional factors by controlling the redox status of their DNA-binding domain, such as the FOS/JUN AP-1 complex after exposure to IR. Involved in calcium-dependent down-regulation of parathyroid hormone (PTH) expression by binding to negative calcium response elements (nCaREs). Together with HNRNPL or the dimer XRCC5/XRCC6, associates with nCaRE, acting as an activator of transcriptional repression. May also play a role in the epigenetic regulation of gene expression by participating in DNA demethylation. Stimulates the YBX1-mediated MDR1 promoter activity, when acetylated at Lys-6 and Lys-7, leading to drug resistance. Plays a role in protection from granzyme-mediated cellular repair leading to cell death. Binds DNA and RNA. Associates, together with YBX1, on the MDR1 promoter. Together with NPM1, associates with rRNA. This chain is DNA repair nuclease/redox regulator APEX1 (Apex1), found in Mus musculus (Mouse).